The following is a 27-amino-acid chain: Weak neurotoxin E3 (27 aa).

As to expression, expressed by the venom gland.

Its subcellular location is the secreted. Binds to muscle nicotinic acetylcholine receptor (nAChR) and inhibit acetylcholine from binding to the receptor, thereby impairing neuromuscular transmission. This is Weak neurotoxin E3 from Micrurus pyrrhocryptus (Coral snake).